The following is a 75-amino-acid chain: Caerin 1.11 (75 aa).

An N-terminal signal peptide occupies residues 1-22 (MASLKKSLFLVLFLGFVSVSIC). Residues 23 to 49 (EEEKRQEDEDEHEEEGENQEEGSEEKR) constitute a propeptide that is removed on maturation. The tract at residues 24–48 (EEKRQEDEDEHEEEGENQEEGSEEK) is disordered. Over residues 30–45 (DEDEHEEEGENQEEGS) the composition is skewed to acidic residues. Leucine amide is present on leucine 74.

This sequence belongs to the frog skin active peptide (FSAP) family. Caerin subfamily. Expressed by the skin glands.

The protein resides in the secreted. Its subcellular location is the target cell membrane. Cationic amphipathic alpha-helical antimicrobial peptide with weak or no activity against both Gram-positive and Gram-negative bacteria. Is weakly active against E.coli (MIC=25 uM), E.cloacae (MIC=50 uM), K.pneumoniae (MIC=25 uM), and S.haemolyticus (MIC=50 uM). Has no activity against S.typhimurium, S.enteritidis, B.megaterium, and S.aureus (MIC&gt;100 uM). This Ranoidea caerulea (Green tree frog) protein is Caerin 1.11.